A 724-amino-acid chain; its full sequence is Solute carrier organic anion transporter family member 4C1 (724 aa).

Topologically, residues 1–105 (MKSAKGIENL…QCLQRCNTPG (105 aa)) are cytoplasmic. Phosphoserine is present on residues serine 15, serine 16, serine 24, serine 26, and serine 28. The disordered stretch occupies residues 30-71 (IEVSALSSDPQRENSQPQELQKPQEPQKSPEPSLPSAPPNVS). The segment covering 44-60 (SQPQELQKPQEPQKSPE) has biased composition (low complexity). Residues 106–126 (GFLLHYCLLAVTQGIVVNGLV) form a helical membrane-spanning segment. The Extracellular portion of the chain corresponds to 127–145 (NISISTVEKRYEMKSSLTG). The chain crosses the membrane as a helical span at residues 146–166 (LISSSYDISFCLLSLFVSFFG). The Cytoplasmic segment spans residues 167–172 (ERGHKP). A helical membrane pass occupies residues 173–197 (RWLAFAAFMIGLGALVFSLPQFFSG). At 198–223 (EYKLGSLFEDTCVTTRNSTSCTSSTS) the chain is on the extracellular side. Residues 224 to 254 (SLSNYLYVFILGQLLLGAGGTPLYTLGTAFL) traverse the membrane as a helical segment. At 255-274 (DDSVPTHKSSLYIGTGYAMS) the chain is on the cytoplasmic side. A helical membrane pass occupies residues 275-295 (ILGPAIGYVLGGQLLTIYIDV). At 296–311 (AMGESTDVTEDDPRWL) the chain is on the extracellular side. A helical transmembrane segment spans residues 312-336 (GAWWIGFLLSWIFAWSLIIPFSCFP). Over 337–377 (KHLPGTAEIQAGKTSQAHQSNSNADVKFGKSIKDFPAALKN) the chain is Cytoplasmic. A helical transmembrane segment spans residues 378–399 (LMKNAVFMCLVLSTSSEALITT). At 400-419 (GFATFLPKFIENQFGLTSSF) the chain is on the extracellular side. A helical membrane pass occupies residues 420 to 443 (AATLGGAVLIPGAALGQILGGFLV). Residues 444–447 (SKFR) lie on the Cytoplasmic side of the membrane. Residues 448–471 (MTCKNTMKFALFTSGVALTLSFVF) traverse the membrane as a helical segment. Residues 472–580 (MYAKCENEPF…ETHCAKLPIF (109 aa)) are Extracellular-facing. The Kazal-like domain maps to 495-549 (GNLIAPCNANCNCSRSYYYPVCGDGVQYFSPCFAGCSNPVAHRKPKVYYNCSCIE). 3 cysteine pairs are disulfide-bonded: cysteine 501–cysteine 530, cysteine 507–cysteine 526, and cysteine 516–cysteine 547. A helical transmembrane segment spans residues 581 to 603 (LCIFFIVIIFTFMAGTPITVSIL). Residues 604–612 (RCVNHRQRS) lie on the Cytoplasmic side of the membrane. The helical transmembrane segment at 613–638 (LALGIQFMVLRLLGTIPGPIIFGFTI) threads the bilayer. Over 639 to 672 (DSTCILWDINDCGIKGACWIYDNIKMAHMLVAIS) the chain is Extracellular. Residues 673–690 (VTCKVITMFFNGFAIFLY) form a helical membrane-spanning segment. The Cytoplasmic segment spans residues 691-724 (KPPPSATDVSFHKENAVVTNVLAEQDLNKIVKEG).

Belongs to the organo anion transporter (TC 2.A.60) family. Predominantly expressed in kidney but also weakly expressed in both fetal liver and kidney.

Its subcellular location is the basolateral cell membrane. It catalyses the reaction estrone 3-sulfate(out) = estrone 3-sulfate(in). The enzyme catalyses L-thyroxine(out) = L-thyroxine(in). The catalysed reaction is 3,3',5-triiodo-L-thyronine(out) = 3,3',5-triiodo-L-thyronine(in). It carries out the reaction chenodeoxycholate(out) = chenodeoxycholate(in). It catalyses the reaction glycocholate(out) = glycocholate(in). The enzyme catalyses L-homoarginine(in) = L-homoarginine(out). The catalysed reaction is L-arginine(in) = L-arginine(out). It carries out the reaction N(omega),N(omega)-dimethyl-L-arginine(out) = N(omega),N(omega)-dimethyl-L-arginine(in). In terms of biological role, mediates the transport of organic anions such as steroids (estrone 3-sulfate, chenodeoxycholate, glycocholate) and thyroid hormones (3,3',5-triiodo-L-thyronine (T3), L-thyroxine (T4)), in the kidney. Capable of transporting cAMP and pharmacological substances such as digoxin, ouabain and methotrexate. Transport is independent of sodium, chloride ion, and ATP. Transport activity is stimulated by an acidic extracellular environment due to increased substrate affinity to the transporter. The driving force for this transport activity is currently not known. The role of hydrogencarbonate (HCO3(-), bicarbonate) as the probable counteranion that exchanges for organic anions is still not well defined. Functions as an uptake transporter at the apical membrane, suggesting a role in renal reabsorption. Involved in the renal secretion of the uremic toxin ADMA (N(omega),N(omega)-dimethyl-L-arginine or asymmetrical dimethylarginine), which is associated to cardiovascular events and mortality, and the structurally related amino acids L-arginine and L-homoarginine (a cardioprotective biomarker). Can act bidirectionally, suggesting a dual protective role of this transport protein; exporting L-homoarginine after being synthesized in proximal tubule cells, and mediating uptake of ADMA from the blood into proximal tubule cells where it is degraded by the enzyme dimethylarginine dimethylaminohydrolase 1 (DDAH1). May be involved in sperm maturation by enabling directed movement of organic anions and compounds within or between cells. This ion-transporting process is important to maintain the strict epididymal homeostasis necessary for sperm maturation. May have a role in secretory functions since seminal vesicle epithelial cells are assumed to secrete proteins involved in decapacitation by modifying surface proteins to facilitate the acquisition of the ability to fertilize the egg. This chain is Solute carrier organic anion transporter family member 4C1, found in Homo sapiens (Human).